The chain runs to 256 residues: Probable histidine-binding protein (256 aa).

Positions 1–19 (MKKFLTAFLVAFTGLFLVA) are cleaved as a signal peptide. C20 carries the N-palmitoyl cysteine lipid modification. Residue C20 is the site of S-diacylglycerol cysteine attachment.

This sequence belongs to the bacterial solute-binding protein 3 family.

It localises to the cell membrane. Functionally, involved in histidine transport. The polypeptide is Probable histidine-binding protein (hisJ) (Campylobacter jejuni subsp. jejuni serotype O:2 (strain ATCC 700819 / NCTC 11168)).